Here is a 339-residue protein sequence, read N- to C-terminus: tRNA(Ile)-lysidine synthase (339 aa).

34-39 (SGGPDS) lines the ATP pocket.

The protein belongs to the tRNA(Ile)-lysidine synthase family.

Its subcellular location is the cytoplasm. It carries out the reaction cytidine(34) in tRNA(Ile2) + L-lysine + ATP = lysidine(34) in tRNA(Ile2) + AMP + diphosphate + H(+). Functionally, ligates lysine onto the cytidine present at position 34 of the AUA codon-specific tRNA(Ile) that contains the anticodon CAU, in an ATP-dependent manner. Cytidine is converted to lysidine, thus changing the amino acid specificity of the tRNA from methionine to isoleucine. The polypeptide is tRNA(Ile)-lysidine synthase (Methylobacterium nodulans (strain LMG 21967 / CNCM I-2342 / ORS 2060)).